The sequence spans 471 residues: Extracellular endo-alpha-(1-&gt;5)-L-arabinanase (471 aa).

The signal sequence occupies residues methionine 1–alanine 19. Aspartate 32 serves as the catalytic Proton acceptor. Residues aspartate 32, glycine 117, asparagine 167 to aspartate 170, serine 187 to phenylalanine 189, and histidine 219 to glutamate 223 contribute to the substrate site. The active-site Proton donor is the glutamate 223. Histidine 314 is a binding site for Ca(2+).

Belongs to the glycosyl hydrolase 43 family. As to quaternary structure, monomer. Requires Ca(2+) as cofactor.

Its subcellular location is the secreted. The catalysed reaction is Endohydrolysis of (1-&gt;5)-alpha-arabinofuranosidic linkages in (1-&gt;5)-arabinans.. It participates in glycan metabolism; L-arabinan degradation. Functionally, involved in the degradation of arabinan and is a key enzyme in the complete degradation of the plant cell wall. Catalyzes the internal cleavage of alpha-(1-&gt;5)-L-arabinofuranosyl residues in different arabinan-containing polysaccharides, and releases arabinotriose and arabinobiose as end products. It acts on branched arabinan (from sugar beet), but more slowly when compared to linear or debranched arabinan. This Thermotoga petrophila (strain ATCC BAA-488 / DSM 13995 / JCM 10881 / RKU-1) protein is Extracellular endo-alpha-(1-&gt;5)-L-arabinanase.